Consider the following 612-residue polypeptide: Sulfite reductase [NADPH] hemoprotein beta-component (612 aa).

The tract at residues Met-1 to Glu-26 is disordered. [4Fe-4S] cluster is bound by residues Cys-469, Cys-475, Cys-514, and Cys-518. Cys-518 is a siroheme binding site.

The protein belongs to the nitrite and sulfite reductase 4Fe-4S domain family. Alpha(8)-beta(8). The alpha component is a flavoprotein, the beta component is a hemoprotein. The cofactor is siroheme. Requires [4Fe-4S] cluster as cofactor.

It carries out the reaction hydrogen sulfide + 3 NADP(+) + 3 H2O = sulfite + 3 NADPH + 4 H(+). The protein operates within sulfur metabolism; hydrogen sulfide biosynthesis; hydrogen sulfide from sulfite (NADPH route): step 1/1. Functionally, component of the sulfite reductase complex that catalyzes the 6-electron reduction of sulfite to sulfide. This is one of several activities required for the biosynthesis of L-cysteine from sulfate. In Methylorubrum extorquens (strain PA1) (Methylobacterium extorquens), this protein is Sulfite reductase [NADPH] hemoprotein beta-component.